The chain runs to 715 residues: Glycine--tRNA ligase beta subunit (715 aa).

It belongs to the class-II aminoacyl-tRNA synthetase family. In terms of assembly, tetramer of two alpha and two beta subunits.

It is found in the cytoplasm. The catalysed reaction is tRNA(Gly) + glycine + ATP = glycyl-tRNA(Gly) + AMP + diphosphate. The protein is Glycine--tRNA ligase beta subunit of Nitrosomonas europaea (strain ATCC 19718 / CIP 103999 / KCTC 2705 / NBRC 14298).